A 218-amino-acid polypeptide reads, in one-letter code: Putative glutamine transport system permease protein GlnP (218 aa).

In terms of domain architecture, ABC transmembrane type-1 spans 19–208; sequence TLITLKYSVI…ILVMLISFIA (190 aa). 4 helical membrane-spanning segments follow: residues 25–45, 57–79, 86–108, and 187–207; these read YSVI…LCKV, FYTS…FASP, FTVF…SEVI, and FFPM…ISFI.

The protein belongs to the binding-protein-dependent transport system permease family. HisMQ subfamily.

It is found in the cell inner membrane. Its function is as follows. Part of the binding-protein-dependent transport system for glutamine; probably responsible for the translocation of the substrate across the membrane. This Rickettsia bellii (strain RML369-C) protein is Putative glutamine transport system permease protein GlnP (glnP).